A 217-amino-acid chain; its full sequence is tRNA (guanine-N(7)-)-methyltransferase (217 aa).

Positions 44, 69, 96, and 118 each coordinate S-adenosyl-L-methionine. Aspartate 118 is a catalytic residue. Residues lysine 122, aspartate 154, and 191–194 (TEYE) each bind substrate.

It belongs to the class I-like SAM-binding methyltransferase superfamily. TrmB family.

It carries out the reaction guanosine(46) in tRNA + S-adenosyl-L-methionine = N(7)-methylguanosine(46) in tRNA + S-adenosyl-L-homocysteine. Its pathway is tRNA modification; N(7)-methylguanine-tRNA biosynthesis. In terms of biological role, catalyzes the formation of N(7)-methylguanine at position 46 (m7G46) in tRNA. This is tRNA (guanine-N(7)-)-methyltransferase from Bacillus cytotoxicus (strain DSM 22905 / CIP 110041 / 391-98 / NVH 391-98).